The chain runs to 357 residues: Peptide chain release factor 1 (357 aa).

An N5-methylglutamine modification is found at Q236.

It belongs to the prokaryotic/mitochondrial release factor family. In terms of processing, methylated by PrmC. Methylation increases the termination efficiency of RF1.

It is found in the cytoplasm. Its function is as follows. Peptide chain release factor 1 directs the termination of translation in response to the peptide chain termination codons UAG and UAA. The sequence is that of Peptide chain release factor 1 from Mycolicibacterium gilvum (strain PYR-GCK) (Mycobacterium gilvum (strain PYR-GCK)).